The chain runs to 731 residues: 1,4-alpha-glucan branching enzyme GlgB (731 aa).

An intrachain disulfide couples Cys-193 to Cys-617. Catalysis depends on Asp-411, which acts as the Nucleophile. Glu-464 functions as the Proton donor in the catalytic mechanism.

This sequence belongs to the glycosyl hydrolase 13 family. GlgB subfamily. Monomer.

It catalyses the reaction Transfers a segment of a (1-&gt;4)-alpha-D-glucan chain to a primary hydroxy group in a similar glucan chain.. The protein operates within glycan biosynthesis; glycogen biosynthesis. It participates in capsule biogenesis; capsule polysaccharide biosynthesis. Essential enzyme that catalyzes the formation of the alpha-1,6-glucosidic linkages in glucan chains by scission of a 1,4-alpha-linked oligosaccharide from growing alpha-1,4-glucan chains and the subsequent attachment of the oligosaccharide to the alpha-1,6 position. Is involved in the biosynthesis of both glycogen and capsular alpha-D-glucan. This Mycobacterium tuberculosis (strain CDC 1551 / Oshkosh) protein is 1,4-alpha-glucan branching enzyme GlgB (glgB).